A 141-amino-acid chain; its full sequence is Lysozyme 1 (141 aa).

The first 19 residues, 1-19, serve as a signal peptide directing secretion; it reads MKFFIVLVAALALAAPAMG. One can recognise a C-type lysozyme domain in the interval 20–141; that stretch reads KTFTRCSLAR…GSLPSINDCF (122 aa). Cystine bridges form between Cys-25–Cys-140, Cys-46–Cys-130, Cys-81–Cys-97, and Cys-93–Cys-111. Residue Glu-51 is part of the active site. Asn-65 carries an N-linked (GlcNAc...) asparagine glycan. The active site involves Asp-69. An N-linked (GlcNAc...) asparagine glycan is attached at Asn-104.

This sequence belongs to the glycosyl hydrolase 22 family.

It catalyses the reaction Hydrolysis of (1-&gt;4)-beta-linkages between N-acetylmuramic acid and N-acetyl-D-glucosamine residues in a peptidoglycan and between N-acetyl-D-glucosamine residues in chitodextrins.. Its function is as follows. May not function as a self-defense protein, but as a digestive enzyme, probably in the gut of the insect body. Inactive towards Micrococcus luteus. Active toward glycol chitin. The protein is Lysozyme 1 of Musca domestica (House fly).